The sequence spans 348 residues: Anthranilate phosphoribosyltransferase (348 aa).

Residues G91, 94–95 (GD), T99, 101–104 (NIST), 119–127 (KHGNRSASG), and S131 contribute to the 5-phospho-alpha-D-ribose 1-diphosphate site. An anthranilate-binding site is contributed by G91. Residue S103 participates in Mg(2+) binding. N122 is an anthranilate binding site. R177 lines the anthranilate pocket. D236 and E237 together coordinate Mg(2+).

This sequence belongs to the anthranilate phosphoribosyltransferase family. Homodimer. It depends on Mg(2+) as a cofactor.

It carries out the reaction N-(5-phospho-beta-D-ribosyl)anthranilate + diphosphate = 5-phospho-alpha-D-ribose 1-diphosphate + anthranilate. Its pathway is amino-acid biosynthesis; L-tryptophan biosynthesis; L-tryptophan from chorismate: step 2/5. In terms of biological role, catalyzes the transfer of the phosphoribosyl group of 5-phosphorylribose-1-pyrophosphate (PRPP) to anthranilate to yield N-(5'-phosphoribosyl)-anthranilate (PRA). The protein is Anthranilate phosphoribosyltransferase of Synechococcus sp. (strain ATCC 27144 / PCC 6301 / SAUG 1402/1) (Anacystis nidulans).